A 103-amino-acid polypeptide reads, in one-letter code: Large ribosomal subunit protein bL21 (103 aa).

This sequence belongs to the bacterial ribosomal protein bL21 family. As to quaternary structure, part of the 50S ribosomal subunit. Contacts protein L20.

In terms of biological role, this protein binds to 23S rRNA in the presence of protein L20. This chain is Large ribosomal subunit protein bL21, found in Dechloromonas aromatica (strain RCB).